The sequence spans 738 residues: MDPFFLNTQHVELLVSGKQSSPQDLLGIVSESLNQDRIVLFRPGAETVFVELRGKIQQAESHHSGIFSLPVMKGISPQDYRVYHQNGLLAHDPYAFPLLWGEIDSFLFHEGTHQRIYERMGAIPCEIDGVPGVRFIVWAPHAQRVSVIGDFNGWHGLVNPLHKVSDQGVWELFVPGLTAGACYKWEMVTESGQVLIKSDPYGKFFGPPPWSVSVVIDDSYEWTDSEWLEERIKKTEGPMNIYEVHVGSWRWQEGQPLNYKELADQLALYCKQMHYTHVELLPVTEHPLNESWGYQTTGYYAPTSRYGSFEDLQYFIDTMHQHGIGVILDWVPGHFPIDSFAMSGFDGTPLYEYTRNPSPLHPHWHTYTFDYAKPEVCNFLLGSVLFWIDKMHVDGIRVDAVSSMLYLDYGRYAGEWVPNRYGGRENLDAIRFLQQFNTVIHEKYPGVLTFAEESTTFPKITVSVEEGGLGFDYKWNMGWMHDTLHYFEKDFPYRPYHQSDLTFPQWYAFSERFLLPFSHDEVVHGKRSLIGKMPGDAWRQFAQLRLLLGYQICQPGKKLLFMGGEFGQGREWSPGRELDWELLDISYHQGVHLCSQELNALYVQSPQLWQADHLPSSFRWVDFSDVRNGVVAYLRFADADAKKALLCVHHFGVGYFPHYLLPILPLESCDLLMNTDDTRFGGSGKGFREPEILTPEIARQEREAAGLIEADDESGPDCWGLDIELPPSATLIFSVTLQ.

The Nucleophile role is filled by aspartate 399. Catalysis depends on glutamate 452, which acts as the Proton donor.

The protein belongs to the glycosyl hydrolase 13 family. GlgB subfamily. Monomer.

The enzyme catalyses Transfers a segment of a (1-&gt;4)-alpha-D-glucan chain to a primary hydroxy group in a similar glucan chain.. Its pathway is glycan biosynthesis; glycogen biosynthesis. In terms of biological role, catalyzes the formation of the alpha-1,6-glucosidic linkages in glycogen by scission of a 1,4-alpha-linked oligosaccharide from growing alpha-1,4-glucan chains and the subsequent attachment of the oligosaccharide to the alpha-1,6 position. This is 1,4-alpha-glucan branching enzyme GlgB from Chlamydia trachomatis serovar D (strain ATCC VR-885 / DSM 19411 / UW-3/Cx).